The sequence spans 335 residues: N-acetyl-gamma-glutamyl-phosphate reductase (335 aa).

The active site involves Cys-156.

This sequence belongs to the NAGSA dehydrogenase family. Type 1 subfamily.

Its subcellular location is the cytoplasm. It catalyses the reaction N-acetyl-L-glutamate 5-semialdehyde + phosphate + NADP(+) = N-acetyl-L-glutamyl 5-phosphate + NADPH + H(+). It functions in the pathway amino-acid biosynthesis; L-arginine biosynthesis; N(2)-acetyl-L-ornithine from L-glutamate: step 3/4. Functionally, catalyzes the NADPH-dependent reduction of N-acetyl-5-glutamyl phosphate to yield N-acetyl-L-glutamate 5-semialdehyde. The sequence is that of N-acetyl-gamma-glutamyl-phosphate reductase from Aeromonas salmonicida (strain A449).